The primary structure comprises 511 residues: Portal protein (511 aa).

This sequence belongs to the Tevenvirinae portal protein family. As to quaternary structure, homododecamer. Interacts with the large terminase subunit. Interacts with the major capsid protein. Interacts with the capsid vertex protein.

The protein localises to the virion. Forms the portal vertex of the capsid. This portal plays critical roles in head assembly, genome packaging, neck/tail attachment, and genome ejection. The portal protein multimerizes as a single ring-shaped homododecamer arranged around a central channel. Binds to the terminase subunits to form the packaging machine. The chain is Portal protein from Vibrio phage KVP40 (isolate Vibrio parahaemolyticus/Japan/Matsuzaki/1991) (KVP40).